We begin with the raw amino-acid sequence, 178 residues long: Beta-lactoglobulin-1A/1C (178 aa).

A signal peptide spans 1 to 18 (MRCLLLTLGLALLCGVQA). Disulfide bonds link C84/C176 and C124/C137.

It belongs to the calycin superfamily. Lipocalin family. Under physiological conditions beta-lactoglobulin exists as an equilibrium mixture of monomeric and dimeric forms.

It is found in the secreted. In terms of biological role, lactoglobulin is the primary component of whey, it binds retinol and is probably involved in the transport of that molecule. The chain is Beta-lactoglobulin-1A/1C from Sus scrofa (Pig).